The primary structure comprises 893 residues: Protein FAM186B (893 aa).

Disordered stretches follow at residues 177 to 207, 327 to 376, 537 to 557, 574 to 611, and 806 to 827; these read GWQG…TMNT, QAED…PSPM, LEKE…DVER, LSLV…QRPM, and KPKK…GPTY. Composition is skewed to polar residues over residues 179-188 and 197-207; these read QGRSPQTSPS and QMLQDQHTMNT. The stretch at 303–331 forms a coiled coil; that stretch reads RYHDLLLMKQALEFQLKKAQNATGQAEDL. The segment covering 342–353 has biased composition (basic and acidic residues); sequence SERETLPRKETV.

It belongs to the FAM186 family.

The chain is Protein FAM186B (FAM186B) from Homo sapiens (Human).